The following is a 309-amino-acid chain: Sulfate adenylyltransferase subunit 2 (309 aa).

This sequence belongs to the PAPS reductase family. CysD subfamily. In terms of assembly, heterodimer composed of CysD, the smaller subunit, and CysN.

The catalysed reaction is sulfate + ATP + H(+) = adenosine 5'-phosphosulfate + diphosphate. It functions in the pathway sulfur metabolism; hydrogen sulfide biosynthesis; sulfite from sulfate: step 1/3. Functionally, with CysN forms the ATP sulfurylase (ATPS) that catalyzes the adenylation of sulfate producing adenosine 5'-phosphosulfate (APS) and diphosphate, the first enzymatic step in sulfur assimilation pathway. APS synthesis involves the formation of a high-energy phosphoric-sulfuric acid anhydride bond driven by GTP hydrolysis by CysN coupled to ATP hydrolysis by CysD. This Mycobacterium bovis (strain ATCC BAA-935 / AF2122/97) protein is Sulfate adenylyltransferase subunit 2.